A 76-amino-acid polypeptide reads, in one-letter code: Vasotab-TY1 (76 aa).

An N-terminal signal peptide occupies residues 1-21; it reads MKFTLFSVLVVLLIATFVAAD. The Kazal-like domain occupies 22–76; that stretch reads DCPRICTADFRPVCGTPSGGRRSANRTFGNQCSLDSHNCLNKGDTYDKLHDGECK. Intrachain disulfides connect Cys-23-Cys-60, Cys-27-Cys-53, and Cys-35-Cys-75.

Expressed by the salivary gland.

It is found in the secreted. In terms of biological role, vasodilator protein that inhibits vasoconstriction of isolated rat femoral artery induced by phenylephrine. Since platelet aggregation and vasoconstriction are key hemostatic responses, particularly in small wounds, this protein likely participates in the antihemostatic responses during blood feeding. Blocks L-type calcium channels (Cav1/CACNA1) in left ventricular myocytes isolated from rat hearts. The polypeptide is Vasotab-TY1 (Tabanus yao (Horsefly)).